The following is a 288-amino-acid chain: Orotidine 5'-phosphate decarboxylase (288 aa).

Lys97 (proton donor) is an active-site residue.

It belongs to the OMP decarboxylase family. Type 2 subfamily.

The catalysed reaction is orotidine 5'-phosphate + H(+) = UMP + CO2. The protein operates within pyrimidine metabolism; UMP biosynthesis via de novo pathway; UMP from orotate: step 2/2. The sequence is that of Orotidine 5'-phosphate decarboxylase from Clostridium tetani (strain Massachusetts / E88).